The following is a 269-amino-acid chain: CUE domain-containing protein 2-B (269 aa).

The disordered stretch occupies residues 110-130 (ASPSEKTATEPLEGAVAQDKD). The CUE domain maps to 131–174 (DPKTGVDLLLEIFPSCTITQAQTALSMAKGDLEDAVQIIVDGKV).

Belongs to the CUEDC2 family. In terms of processing, phosphorylated.

Its subcellular location is the cytoplasm. It localises to the nucleus. Functionally, may play a role in targeting proteins for ubiquitination and subsequent proteasomal degradation. The protein is CUE domain-containing protein 2-B (cuedc2-b) of Xenopus laevis (African clawed frog).